The primary structure comprises 357 residues: Endo-1,4-beta-xylanase Xyn11B (357 aa).

Residues 1 to 27 form the signal peptide; sequence MKIFQNTKNVIVSIAWAAALCTSAVSA. A GH11 domain is found at 29-226; sequence TLTSNSTGTN…SRGSSDITVS (198 aa). The active-site Nucleophile is Glu116. Glu213 acts as the Proton donor in catalysis. A disordered region spans residues 220–245; that stretch reads SSDITVSQGGSSGGGNSSSSSSASGG.

Belongs to the glycosyl hydrolase 11 (cellulase G) family.

The protein resides in the secreted. It carries out the reaction Endohydrolysis of (1-&gt;4)-beta-D-xylosidic linkages in xylans.. It participates in glycan degradation; xylan degradation. In terms of biological role, endo-acting xylanase which specifically cleaves internal linkages on the xylan backbone, releasing xylooligosaccharides. Is able to hydrolyze glucuronoxylan and the arabinoxylan from wheat. The protein is Endo-1,4-beta-xylanase Xyn11B (xyn11B) of Cellvibrio japonicus (Pseudomonas fluorescens subsp. cellulosa).